Reading from the N-terminus, the 172-residue chain is Large ribosomal subunit protein uL10 (172 aa).

Belongs to the universal ribosomal protein uL10 family. Part of the ribosomal stalk of the 50S ribosomal subunit. The N-terminus interacts with L11 and the large rRNA to form the base of the stalk. The C-terminus forms an elongated spine to which L12 dimers bind in a sequential fashion forming a multimeric L10(L12)X complex.

Its function is as follows. Forms part of the ribosomal stalk, playing a central role in the interaction of the ribosome with GTP-bound translation factors. This chain is Large ribosomal subunit protein uL10, found in Syntrophotalea carbinolica (strain DSM 2380 / NBRC 103641 / GraBd1) (Pelobacter carbinolicus).